The following is a 211-amino-acid chain: Imidazole glycerol phosphate synthase subunit HisH (211 aa).

One can recognise a Glutamine amidotransferase type-1 domain in the interval 3 to 211 (VIAVIDYDMG…VSQIKAPVLV (209 aa)). Residue C81 is the Nucleophile of the active site. Active-site residues include H186 and E188.

Heterodimer of HisH and HisF.

Its subcellular location is the cytoplasm. The catalysed reaction is 5-[(5-phospho-1-deoxy-D-ribulos-1-ylimino)methylamino]-1-(5-phospho-beta-D-ribosyl)imidazole-4-carboxamide + L-glutamine = D-erythro-1-(imidazol-4-yl)glycerol 3-phosphate + 5-amino-1-(5-phospho-beta-D-ribosyl)imidazole-4-carboxamide + L-glutamate + H(+). It catalyses the reaction L-glutamine + H2O = L-glutamate + NH4(+). The protein operates within amino-acid biosynthesis; L-histidine biosynthesis; L-histidine from 5-phospho-alpha-D-ribose 1-diphosphate: step 5/9. Functionally, IGPS catalyzes the conversion of PRFAR and glutamine to IGP, AICAR and glutamate. The HisH subunit catalyzes the hydrolysis of glutamine to glutamate and ammonia as part of the synthesis of IGP and AICAR. The resulting ammonia molecule is channeled to the active site of HisF. The polypeptide is Imidazole glycerol phosphate synthase subunit HisH (Cyanothece sp. (strain PCC 7425 / ATCC 29141)).